The sequence spans 115 residues: MTRVKRGYVARKRRKNIFTLTSGFQGAHSKLFRTANQQGMRALASSYRDRNRRKRDLRRLWITRINAAARNNGISYNKLIQNLYQNQILLNRKMLAQIALLDTNCFSTIMKKINE.

It belongs to the bacterial ribosomal protein bL20 family.

Its subcellular location is the plastid. It is found in the chloroplast. Functionally, binds directly to 23S ribosomal RNA and is necessary for the in vitro assembly process of the 50S ribosomal subunit. It is not involved in the protein synthesizing functions of that subunit. This Physcomitrium patens (Spreading-leaved earth moss) protein is Large ribosomal subunit protein bL20c.